Reading from the N-terminus, the 406-residue chain is Phosphopentomutase (406 aa).

Mn(2+) contacts are provided by D10, D305, H310, D346, H347, and H358.

This sequence belongs to the phosphopentomutase family. It depends on Mn(2+) as a cofactor.

It is found in the cytoplasm. The enzyme catalyses 2-deoxy-alpha-D-ribose 1-phosphate = 2-deoxy-D-ribose 5-phosphate. The catalysed reaction is alpha-D-ribose 1-phosphate = D-ribose 5-phosphate. It participates in carbohydrate degradation; 2-deoxy-D-ribose 1-phosphate degradation; D-glyceraldehyde 3-phosphate and acetaldehyde from 2-deoxy-alpha-D-ribose 1-phosphate: step 1/2. Functionally, isomerase that catalyzes the conversion of deoxy-ribose 1-phosphate (dRib-1-P) and ribose 1-phosphate (Rib-1-P) to deoxy-ribose 5-phosphate (dRib-5-P) and ribose 5-phosphate (Rib-5-P), respectively. The sequence is that of Phosphopentomutase from Aliivibrio fischeri (strain MJ11) (Vibrio fischeri).